Consider the following 111-residue polypeptide: Cytochrome b-c1 complex subunit 7 (111 aa).

The residue at position 2 (Ala-2) is an N-acetylalanine. Residue Lys-12 is modified to N6-acetyllysine; alternate. Lys-12 is subject to N6-succinyllysine; alternate. Residue Lys-19 is modified to N6-acetyllysine. Lys-78 is modified (N6-acetyllysine; alternate). An N6-succinyllysine; alternate modification is found at Lys-78. Lys-83 carries the N6-acetyllysine modification. Lys-88 bears the N6-acetyllysine; alternate mark. At Lys-88 the chain carries N6-succinyllysine; alternate. Residue Lys-96 is modified to N6-acetyllysine.

It belongs to the UQCRB/QCR7 family. As to quaternary structure, component of the ubiquinol-cytochrome c oxidoreductase (cytochrome b-c1 complex, complex III, CIII), a multisubunit enzyme composed of 11 subunits. The complex is composed of 3 respiratory subunits cytochrome b, cytochrome c1 and Rieske protein UQCRFS1, 2 core protein subunits UQCRC1/QCR1 and UQCRC2/QCR2, and 6 low-molecular weight protein subunits UQCRH/QCR6, UQCRB/QCR7, UQCRQ/QCR8, UQCR10/QCR9, UQCR11/QCR10 and subunit 9, the cleavage product of Rieske protein UQCRFS1. The complex exists as an obligatory dimer and forms supercomplexes (SCs) in the inner mitochondrial membrane with NADH-ubiquinone oxidoreductase (complex I, CI) and cytochrome c oxidase (complex IV, CIV), resulting in different assemblies (supercomplex SCI(1)III(2)IV(1) and megacomplex MCI(2)III(2)IV(2)).

The protein resides in the mitochondrion inner membrane. Functionally, component of the ubiquinol-cytochrome c oxidoreductase, a multisubunit transmembrane complex that is part of the mitochondrial electron transport chain which drives oxidative phosphorylation. The respiratory chain contains 3 multisubunit complexes succinate dehydrogenase (complex II, CII), ubiquinol-cytochrome c oxidoreductase (cytochrome b-c1 complex, complex III, CIII) and cytochrome c oxidase (complex IV, CIV), that cooperate to transfer electrons derived from NADH and succinate to molecular oxygen, creating an electrochemical gradient over the inner membrane that drives transmembrane transport and the ATP synthase. The cytochrome b-c1 complex catalyzes electron transfer from ubiquinol to cytochrome c, linking this redox reaction to translocation of protons across the mitochondrial inner membrane, with protons being carried across the membrane as hydrogens on the quinol. In the process called Q cycle, 2 protons are consumed from the matrix, 4 protons are released into the intermembrane space and 2 electrons are passed to cytochrome c. In Mus musculus (Mouse), this protein is Cytochrome b-c1 complex subunit 7 (Uqcrb).